A 79-amino-acid polypeptide reads, in one-letter code: Small ribosomal subunit protein bS18 (79 aa).

The protein belongs to the bacterial ribosomal protein bS18 family. As to quaternary structure, part of the 30S ribosomal subunit. Forms a tight heterodimer with protein bS6.

In terms of biological role, binds as a heterodimer with protein bS6 to the central domain of the 16S rRNA, where it helps stabilize the platform of the 30S subunit. This Salinispora arenicola (strain CNS-205) protein is Small ribosomal subunit protein bS18.